An 89-amino-acid polypeptide reads, in one-letter code: Pigment dispersing factor homolog pdf-2 (89 aa).

Positions Met-1–Ala-27 are cleaved as a signal peptide.

Functionally, probable ligand of isoforms a and b of the calcitonin receptor-like protein, pdfr-1, a G-protein coupled receptor. May not signal through isoform c of pdfr-1. Involved in locomotion; may play a role in circadian rhythms of locomotor activity. Modulator of egg-laying. The sequence is that of Pigment dispersing factor homolog pdf-2 from Caenorhabditis elegans.